We begin with the raw amino-acid sequence, 387 residues long: uncharacterized protein (387 aa).

The protein to M.jannaschii MJ0043 N-terminal region.

This is an uncharacterized protein from Bacillus subtilis (strain 168).